A 378-amino-acid chain; its full sequence is Actin-related protein 2/3 complex subunit 1B (378 aa).

7 WD repeats span residues 8-47 (RFAE…HWER), 53-92 (KHDQ…WVPT), 97-138 (RLNR…WVSK), 143-182 (RHES…VDTK), 203-242 (LSYS…PLAQ), 257-295 (ISEK…KAAS), and 331-375 (VHDN…QELG). The interval 319–340 (TTANDASDSRGGVHDNSITSIV) is disordered.

Belongs to the WD repeat ARPC1 family. As to quaternary structure, component of the Arp2/3 complex composed of ARP2, ARP3, ARPC1/p41-ARC, ARPC2/p34-ARC, ARPC3/p21-ARC, ARPC4/p20-ARC and ARPC5/p16-ARC. In terms of tissue distribution, expressed at low levels in all tissues with a relatively highest expression in inflorescences.

The protein resides in the cytoplasm. Its subcellular location is the cytoskeleton. In terms of biological role, functions as a component of the Arp2/3 complex which is involved in regulation of actin polymerization and together with an activating nucleation-promoting factor (NPF) mediates the formation of branched actin networks. Arp2/3 complex plays a critical role in the control of cell morphogenesis via the modulation of cell polarity development. This chain is Actin-related protein 2/3 complex subunit 1B (ARPC1B), found in Arabidopsis thaliana (Mouse-ear cress).